A 68-amino-acid chain; its full sequence is Tabimmunregulin 1 (68 aa).

The N-terminal stretch at 1–26 (MLLKSYVFFLLSLLIVGLFTSRDADA) is a signal peptide. A propeptide spanning residues 27–38 (QYEDLVTGYLRK) is cleaved from the precursor.

Expressed in salivary glands.

It is found in the secreted. Functionally, horsefly salivary gland immunosuppressant protein that likely inhibits the host inflammatory response by regulation of anti- and pro-inflammatory cytokines. When tested on mouse splenocytes in the presence of LPS, it increases the secretion of the proinflammatory cytokine interleukin-10 (IL10) and decreases the secretion of the proinflammatory cytokine interferon-gamma (IFNG) in a dose-dependent manner. This Tabanus yao (Horsefly) protein is Tabimmunregulin 1.